Here is a 283-residue protein sequence, read N- to C-terminus: Bifunctional protein FolD 2 (283 aa).

NADP(+) contacts are provided by residues 165–167 (GAS), Ser-190, and Ile-231.

Belongs to the tetrahydrofolate dehydrogenase/cyclohydrolase family. In terms of assembly, homodimer.

It carries out the reaction (6R)-5,10-methylene-5,6,7,8-tetrahydrofolate + NADP(+) = (6R)-5,10-methenyltetrahydrofolate + NADPH. It catalyses the reaction (6R)-5,10-methenyltetrahydrofolate + H2O = (6R)-10-formyltetrahydrofolate + H(+). Its pathway is one-carbon metabolism; tetrahydrofolate interconversion. Its function is as follows. Catalyzes the oxidation of 5,10-methylenetetrahydrofolate to 5,10-methenyltetrahydrofolate and then the hydrolysis of 5,10-methenyltetrahydrofolate to 10-formyltetrahydrofolate. The sequence is that of Bifunctional protein FolD 2 from Bordetella pertussis (strain Tohama I / ATCC BAA-589 / NCTC 13251).